Here is a 358-residue protein sequence, read N- to C-terminus: Aromatic amino acid aminotransferase (358 aa).

Lysine 222 carries the N6-(pyridoxal phosphate)lysine modification.

It belongs to the class-II pyridoxal-phosphate-dependent aminotransferase family. Homodimer. It depends on pyridoxal 5'-phosphate as a cofactor.

It catalyses the reaction an aromatic L-alpha-amino acid + 2-oxoglutarate = an aromatic oxo-acid + L-glutamate. Functionally, aminotransferase that catalyzes the conversion of aromatic amino acids and 2-oxoglutarate into corresponding aromatic oxo acids and L-glutamate. In Mycobacterium sp. (strain KMS), this protein is Aromatic amino acid aminotransferase.